We begin with the raw amino-acid sequence, 519 residues long: Ribose import ATP-binding protein RbsA 2 (519 aa).

2 ABC transporter domains span residues 15–252 (FRLR…VGRP) and 262–506 (HEPG…TGVR). 47 to 54 (GENGAGKS) is a binding site for ATP.

Belongs to the ABC transporter superfamily. Ribose importer (TC 3.A.1.2.1) family. In terms of assembly, the complex is composed of an ATP-binding protein (RbsA), two transmembrane proteins (RbsC) and a solute-binding protein (RbsB).

The protein localises to the cell membrane. It carries out the reaction D-ribose(out) + ATP + H2O = D-ribose(in) + ADP + phosphate + H(+). Part of the ABC transporter complex RbsABC involved in ribose import. Responsible for energy coupling to the transport system. The chain is Ribose import ATP-binding protein RbsA 2 from Rubrobacter xylanophilus (strain DSM 9941 / JCM 11954 / NBRC 16129 / PRD-1).